Here is a 489-residue protein sequence, read N- to C-terminus: 3-octaprenyl-4-hydroxybenzoate carboxy-lyase (489 aa).

Position 172 (asparagine 172) interacts with Mn(2+). Residues 175 to 177, 189 to 191, and 194 to 195 each bind prenylated FMN; these read IYR, RWL, and RG. Position 238 (glutamate 238) interacts with Mn(2+). Aspartate 287 (proton donor) is an active-site residue.

It belongs to the UbiD family. Homohexamer. Requires prenylated FMN as cofactor. It depends on Mn(2+) as a cofactor.

The protein localises to the cell membrane. The enzyme catalyses a 4-hydroxy-3-(all-trans-polyprenyl)benzoate + H(+) = a 2-(all-trans-polyprenyl)phenol + CO2. Its pathway is cofactor biosynthesis; ubiquinone biosynthesis. Its function is as follows. Catalyzes the decarboxylation of 3-octaprenyl-4-hydroxy benzoate to 2-octaprenylphenol, an intermediate step in ubiquinone biosynthesis. This Klebsiella pneumoniae (strain 342) protein is 3-octaprenyl-4-hydroxybenzoate carboxy-lyase.